We begin with the raw amino-acid sequence, 279 residues long: Tryptophan 2,3-dioxygenase (279 aa).

Residues 48-52, Tyr-110, and Arg-114 each bind substrate; that span reads FIVIH. Residue His-237 participates in heme binding. Thr-251 contributes to the substrate binding site.

Belongs to the tryptophan 2,3-dioxygenase family. Homotetramer. Heme serves as cofactor.

The catalysed reaction is L-tryptophan + O2 = N-formyl-L-kynurenine. Its pathway is amino-acid degradation; L-tryptophan degradation via kynurenine pathway; L-kynurenine from L-tryptophan: step 1/2. Functionally, heme-dependent dioxygenase that catalyzes the oxidative cleavage of the L-tryptophan (L-Trp) pyrrole ring and converts L-tryptophan to N-formyl-L-kynurenine. Catalyzes the oxidative cleavage of the indole moiety. This is Tryptophan 2,3-dioxygenase from Bacillus thuringiensis subsp. konkukian (strain 97-27).